The sequence spans 830 residues: Eisosome protein 1 (830 aa).

3 disordered regions span residues methionine 1 to lysine 29, arginine 128 to lysine 156, and glycine 650 to phenylalanine 830. 2 stretches are compositionally biased toward low complexity: residues arginine 128–serine 148 and threonine 741–threonine 761. Residues glutamate 810–phenylalanine 830 are compositionally biased toward basic and acidic residues.

Belongs to the EIS1 family.

Its subcellular location is the cytoplasmic granule. The protein resides in the cell membrane. Required for normal formation of eisosomes, large cytoplasmic protein assemblies that localize to specialized domains on plasma membrane and mark the site of endocytosis. The sequence is that of Eisosome protein 1 (EIS1) from Kluyveromyces lactis (strain ATCC 8585 / CBS 2359 / DSM 70799 / NBRC 1267 / NRRL Y-1140 / WM37) (Yeast).